Reading from the N-terminus, the 700-residue chain is Protein claret segregational (700 aa).

Ser-94 and Ser-96 each carry phosphoserine. A disordered region spans residues Ala-141 to Ala-185. Positions Ala-149–Ala-185 are enriched in low complexity. A coiled-coil region spans residues Lys-196 to Arg-346. One can recognise a Kinesin motor domain in the interval Asn-348–Cys-670. Gly-434–Thr-441 contacts ATP. Residues Ala-664–Asn-668 are required for minus-end directionality. Residues Leu-681–Lys-700 form a disordered region.

Belongs to the TRAFAC class myosin-kinesin ATPase superfamily. Kinesin family. NCD subfamily.

It localises to the cytoplasm. The protein localises to the cytoskeleton. It catalyses the reaction ATP + H2O = ADP + phosphate + H(+). Minus-end-directed microtubule-based motor protein. Has ATPase activity. Required for normal chromosomal segregation in meiosis in females, and in early mitotic divisions of the embryo. In Drosophila melanogaster (Fruit fly), this protein is Protein claret segregational (ncd).